A 458-amino-acid polypeptide reads, in one-letter code: Phosphoglucosamine mutase (458 aa).

S106 functions as the Phosphoserine intermediate in the catalytic mechanism. Residues S106, D247, D249, and D251 each coordinate Mg(2+). Residue S106 is modified to Phosphoserine.

It belongs to the phosphohexose mutase family. The cofactor is Mg(2+). Post-translationally, activated by phosphorylation.

The catalysed reaction is alpha-D-glucosamine 1-phosphate = D-glucosamine 6-phosphate. In terms of biological role, catalyzes the conversion of glucosamine-6-phosphate to glucosamine-1-phosphate. This chain is Phosphoglucosamine mutase, found in Chlamydia pneumoniae (Chlamydophila pneumoniae).